A 303-amino-acid chain; its full sequence is Crk-like protein (303 aa).

Positions 14-102 constitute an SH2 domain; the sequence is WYMGPVSRQE…LDTTTLIEPA (89 aa). Residues 123–183 form the SH3 1 domain; the sequence is DNLEYVRTLY…PVPYVEKLVR (61 aa). Phosphotyrosine occurs at positions 127 and 207. The segment at 184–234 is disordered; the sequence is SSPHGKHGNRNSNSYGIPEPAHAYAQPQTTTPLPAVSGSPGAAITPLPSTQ. The SH3 2 domain maps to 235–296; that stretch reads NGPVFAKAIQ…PFTHVKIFDP (62 aa).

It belongs to the CRK family. As to quaternary structure, interacts with tyrosine-phosphorylated EPOR and INPP5D/SHIP1. Interacts with DOCK2 and DOCK5 via its first SH3 domain. Interacts with phosphorylated CBLB and IRS4. Interacts with BCAR1/CAS and NEDD9/HEF1.

In terms of biological role, may mediate the transduction of intracellular signals. The sequence is that of Crk-like protein (CRKL) from Homo sapiens (Human).